The chain runs to 421 residues: MDLENKVKKMGLGHEQGFGAPCLKCKEKCEGFELHFWRKICRNCKCGQEEHDVLLSNEEDRKVGKLFEDTKYTTLIAKLKSDGIPMYKRNVMILTNPVAAKKNVSINTVTYEWAPPVHNQALARQYMQMLPKEKQPVAGSEGAQYRKKQLAKQLPAHDQDPSKCHELSPREVKEMEQFVKKYKSEALGVGDVKLPCEMDAQGPKKMYIPGGDRSTPPAAGAMEDKSAEHKSTQYSCYCCKLNMKEGDPAIYAERAGYDKLWHPACFVCSVCHELLVDMIYFWKNEKLYCGRHYCDSEKPRCAGCDELIFSNEYTQAENQNWHLKHFCCFDCDSILAGEIYVMVNDKPVCKPCYVKNHAVVCQGCHNAIDPEVQRVTYNNFSWHASTECFLCSCCSKCLIGQKFMPVEGMVFCSVECKKMMS.

The 108-residue stretch at 92–199 (MILTNPVAAK…GDVKLPCEMD (108 aa)) folds into the PET domain. Positions 133–164 (EKQPVAGSEGAQYRKKQLAKQLPAHDQDPSKC) are disordered. Residues 155–164 (PAHDQDPSKC) show a composition bias toward basic and acidic residues. 3 LIM zinc-binding domains span residues 234 to 297 (YSCY…CDSE), 299 to 359 (PRCA…NHAV), and 362 to 421 (QGCH…KMMS).

The protein belongs to the prickle / espinas / testin family. In terms of assembly, interacts via LIM domain 1 with ZYX. Interacts (via LIM domain 3) with ENAH and VASP. Interacts with ALKBH4, talin, actin, alpha-actinin, GRIP1 and PXN. Interacts (via LIM domain 2) with ACTL7A (via N-terminus). Heterodimer with ACTL7A; the heterodimer interacts with ENAH to form a heterotrimer.

It localises to the cytoplasm. The protein resides in the cell junction. It is found in the focal adhesion. In terms of biological role, scaffold protein that may play a role in cell adhesion, cell spreading and in the reorganization of the actin cytoskeleton. Plays a role in the regulation of cell proliferation. May act as a tumor suppressor. This chain is Testin (TES), found in Saimiri boliviensis boliviensis (Bolivian squirrel monkey).